A 168-amino-acid polypeptide reads, in one-letter code: Phosphopantetheine adenylyltransferase (168 aa).

Position 13 (Thr-13) interacts with substrate. ATP-binding positions include 13 to 14 and His-21; that span reads TF. Substrate-binding residues include Lys-45, Leu-78, and Arg-92. ATP-binding positions include 93 to 95, Glu-103, and 128 to 134; these read GLR and TQFISSS.

The protein belongs to the bacterial CoaD family. In terms of assembly, homohexamer. Mg(2+) serves as cofactor.

It localises to the cytoplasm. The catalysed reaction is (R)-4'-phosphopantetheine + ATP + H(+) = 3'-dephospho-CoA + diphosphate. It functions in the pathway cofactor biosynthesis; coenzyme A biosynthesis; CoA from (R)-pantothenate: step 4/5. Its function is as follows. Reversibly transfers an adenylyl group from ATP to 4'-phosphopantetheine, yielding dephospho-CoA (dPCoA) and pyrophosphate. The protein is Phosphopantetheine adenylyltransferase of Wolbachia pipientis wMel.